The chain runs to 428 residues: Adenylosuccinate synthetase (428 aa).

GTP-binding positions include 12-18 and 40-42; these read GDEGKGK and GHT. Catalysis depends on aspartate 13, which acts as the Proton acceptor. Mg(2+) contacts are provided by aspartate 13 and glycine 40. Residues 13 to 16, 38 to 41, threonine 129, arginine 143, glutamine 224, threonine 239, and arginine 303 each bind IMP; these read DEGK and NAGH. Histidine 41 (proton donor) is an active-site residue. Residue 299–305 coordinates substrate; that stretch reads VTTGRIR. GTP-binding positions include arginine 305, 331–333, and 410–412; these read KVD and AYG.

This sequence belongs to the adenylosuccinate synthetase family. Homodimer. The cofactor is Mg(2+).

It localises to the cytoplasm. It carries out the reaction IMP + L-aspartate + GTP = N(6)-(1,2-dicarboxyethyl)-AMP + GDP + phosphate + 2 H(+). Its pathway is purine metabolism; AMP biosynthesis via de novo pathway; AMP from IMP: step 1/2. Plays an important role in the de novo pathway of purine nucleotide biosynthesis. Catalyzes the first committed step in the biosynthesis of AMP from IMP. The polypeptide is Adenylosuccinate synthetase (Francisella tularensis subsp. mediasiatica (strain FSC147)).